The chain runs to 114 residues: MKVVAAYLLAKLSGNENPSVADLKKIVESVGAEIDQEKIDLFFSLIKDRDVTELIAVGREKMAALSSGGGAVAVASGGGGGAAPAAEPASVESKKKEEEKEESEDDGGMMSLFD.

The tract at residues 74–114 is disordered; sequence VASGGGGGAAPAAEPASVESKKKEEEKEESEDDGGMMSLFD. Position 103 is a phosphoserine (Ser103).

Belongs to the eukaryotic ribosomal protein P1/P2 family. P1 and P2 exist as dimers at the large ribosomal subunit. Phosphorylated.

Its function is as follows. Plays an important role in the elongation step of protein synthesis. The sequence is that of Large ribosomal subunit protein P2v (RPP2E) from Arabidopsis thaliana (Mouse-ear cress).